Here is a 206-residue protein sequence, read N- to C-terminus: Cytidylate kinase (206 aa).

9 to 17 contacts ATP; sequence GPAAAGKGT.

It belongs to the cytidylate kinase family. Type 1 subfamily.

The protein resides in the cytoplasm. It carries out the reaction CMP + ATP = CDP + ADP. The enzyme catalyses dCMP + ATP = dCDP + ADP. This is Cytidylate kinase from Cereibacter sphaeroides (strain ATCC 17023 / DSM 158 / JCM 6121 / CCUG 31486 / LMG 2827 / NBRC 12203 / NCIMB 8253 / ATH 2.4.1.) (Rhodobacter sphaeroides).